The following is a 412-amino-acid chain: Multifunctional CCA protein (412 aa).

ATP is bound by residues glycine 8 and arginine 11. Positions 8 and 11 each coordinate CTP. 2 residues coordinate Mg(2+): aspartate 21 and aspartate 23. The ATP site is built by arginine 91, arginine 137, and arginine 140. Arginine 91, arginine 137, and arginine 140 together coordinate CTP. In terms of domain architecture, HD spans 228–329 (TGIHTMMVLA…LKVFDKADAW (102 aa)).

It belongs to the tRNA nucleotidyltransferase/poly(A) polymerase family. Bacterial CCA-adding enzyme type 1 subfamily. Monomer. Can also form homodimers and oligomers. Requires Mg(2+) as cofactor. It depends on Ni(2+) as a cofactor.

The enzyme catalyses a tRNA precursor + 2 CTP + ATP = a tRNA with a 3' CCA end + 3 diphosphate. The catalysed reaction is a tRNA with a 3' CCA end + 2 CTP + ATP = a tRNA with a 3' CCACCA end + 3 diphosphate. In terms of biological role, catalyzes the addition and repair of the essential 3'-terminal CCA sequence in tRNAs without using a nucleic acid template. Adds these three nucleotides in the order of C, C, and A to the tRNA nucleotide-73, using CTP and ATP as substrates and producing inorganic pyrophosphate. tRNA 3'-terminal CCA addition is required both for tRNA processing and repair. Also involved in tRNA surveillance by mediating tandem CCA addition to generate a CCACCA at the 3' terminus of unstable tRNAs. While stable tRNAs receive only 3'-terminal CCA, unstable tRNAs are marked with CCACCA and rapidly degraded. This chain is Multifunctional CCA protein, found in Aeromonas hydrophila subsp. hydrophila (strain ATCC 7966 / DSM 30187 / BCRC 13018 / CCUG 14551 / JCM 1027 / KCTC 2358 / NCIMB 9240 / NCTC 8049).